The sequence spans 147 residues: 2-amino-4-hydroxy-6-hydroxymethyldihydropteridine pyrophosphokinase (147 aa).

Belongs to the HPPK family.

It carries out the reaction 6-hydroxymethyl-7,8-dihydropterin + ATP = (7,8-dihydropterin-6-yl)methyl diphosphate + AMP + H(+). Its pathway is cofactor biosynthesis; tetrahydrofolate biosynthesis; 2-amino-4-hydroxy-6-hydroxymethyl-7,8-dihydropteridine diphosphate from 7,8-dihydroneopterin triphosphate: step 4/4. Its function is as follows. Catalyzes the transfer of pyrophosphate from adenosine triphosphate (ATP) to 6-hydroxymethyl-7,8-dihydropterin, an enzymatic step in folate biosynthesis pathway. This is 2-amino-4-hydroxy-6-hydroxymethyldihydropteridine pyrophosphokinase (folK) from Porphyromonas gingivalis (strain ATCC 33277 / DSM 20709 / CIP 103683 / JCM 12257 / NCTC 11834 / 2561).